Reading from the N-terminus, the 299-residue chain is tRNA dimethylallyltransferase 2 (299 aa).

9 to 16 (GPTGVGKT) is a binding site for ATP. 11–16 (TGVGKT) serves as a coordination point for substrate. Positions 34 to 37 (DSRQ) are interaction with substrate tRNA.

Belongs to the IPP transferase family. Monomer. It depends on Mg(2+) as a cofactor.

The enzyme catalyses adenosine(37) in tRNA + dimethylallyl diphosphate = N(6)-dimethylallyladenosine(37) in tRNA + diphosphate. Its function is as follows. Catalyzes the transfer of a dimethylallyl group onto the adenine at position 37 in tRNAs that read codons beginning with uridine, leading to the formation of N6-(dimethylallyl)adenosine (i(6)A). In Parabacteroides distasonis (strain ATCC 8503 / DSM 20701 / CIP 104284 / JCM 5825 / NCTC 11152), this protein is tRNA dimethylallyltransferase 2.